A 164-amino-acid polypeptide reads, in one-letter code: C-phycoerythrin class 1 subunit alpha (164 aa).

Residues Cys82 and Cys139 each contribute to the (2R,3E)-phycoerythrobilin site.

The protein belongs to the phycobiliprotein family. Heterodimer of an alpha and a beta chain. Contains one covalently linked bilin chromophore.

The protein resides in the cellular thylakoid membrane. In terms of biological role, light-harvesting photosynthetic bile pigment-protein from the phycobiliprotein complex. The polypeptide is C-phycoerythrin class 1 subunit alpha (cpeA) (Synechococcus sp. (strain WH7803)).